A 274-amino-acid polypeptide reads, in one-letter code: MDSRMSDLQALRGFLGGSERLFVLTGAGCSTASGIPDYRDGQGQWKRKPPIDFQAFMGGQPARARYWARSMVGWRHFGQARPNAAHHALARLAQRGQVDLLVTQNVDRLHQAAGGREVLDLHGRLDEVRCMQCDWRGPRGPWQHTLELANPQWAALQAGAAPDGNADLEGQDFSRFVVPSCPRCGGIVKPDVVFFGETVPRERVQRAYAALEHADAVLVVGSSLMLYSGYRFVQAAARAGLPIAAINLGRTRADDMLALKVSRPCDEVLAEVVP.

The region spanning 1–274 (MDSRMSDLQA…CDEVLAEVVP (274 aa)) is the Deacetylase sirtuin-type domain. Residues 26–46 (GAGC…GQWK) and 104–107 (QNVD) contribute to the NAD(+) site. His122 serves as the catalytic Proton acceptor. Positions 130, 133, 181, and 184 each coordinate Zn(2+). NAD(+)-binding positions include 221-223 (GSS), 247-249 (NLG), and Cys265.

This sequence belongs to the sirtuin family. Class II subfamily. It depends on Zn(2+) as a cofactor.

It is found in the cytoplasm. It carries out the reaction N(6)-acetyl-L-lysyl-[protein] + NAD(+) + H2O = 2''-O-acetyl-ADP-D-ribose + nicotinamide + L-lysyl-[protein]. Its function is as follows. NAD-dependent protein deacetylase which modulates the activities of several enzymes which are inactive in their acetylated form. This chain is NAD-dependent protein deacetylase, found in Bordetella pertussis (strain Tohama I / ATCC BAA-589 / NCTC 13251).